The following is a 1392-amino-acid chain: Leucine-rich PPR motif-containing protein, mitochondrial (1392 aa).

The transit peptide at 1 to 59 (MAALLRPARWLLGAAAAPRLPLSLRLPAGVPGRLSSVVRVAAVGSRPAAGERLSQARLY) directs the protein to the mitochondrion. PPR repeat units lie at residues 125–159 (LLRS…GVVY), 160–194 (DVSH…NIQP), 195–229 (NRVT…DLPI), 230–264 (TEAV…GIEP), 265–299 (GPDT…DHYF), 300–334 (MDRD…RRSI), 402–436 (HSSS…GFPI), 437–471 (RPHY…GVDP), 677–708 (VGSA…ESDM), 709–745 (VIGG…SAIL), 746–783 (DTAK…IKDA), 784–820 (TVLS…AKPS), 821–856 (SNIS…VLPR), and 953–987 (RDQM…NIIP). N6-acetyllysine is present on residues Lys151, Lys186, and Lys225. At Lys291 the chain carries N6-acetyllysine. Lys462 bears the N6-acetyllysine mark. Residue Lys749 is modified to N6-acetyllysine. Positions 931 to 1050 (ASNQVEALEK…NCKLKKSKDA (120 aa)) are RNA-binding. Ser1025, Ser1026, and Ser1028 each carry phosphoserine. PPR repeat units lie at residues 1030–1064 (GEDV…NVVF), 1065–1101 (SSET…GFTL), 1102–1136 (NDAA…KQVP), 1137–1175 (SQIA…LSKM), 1176–1210 (VFIN…QAIE), and 1315–1349 (NDKV…NLKL). At Ser1137 the chain carries Phosphoserine.

Component of mRNP complexes associated with HNRPA1. Component of the complex, at least composed of LRPPRC, BECN1 and BCL2; the interactions prevent BECN1 from forming an autophagy-inducing complex with PIK3C3. Interacts with CECR2, HEBP2, MAP1S and UXT. Interacts with PPARGC1A. Interacts with FOXO1. Interacts (via N-terminus) with EIF4E; the interaction promotes association of EIF4E with 4ESE-containing mRNAs. Interacts with exportin XPO1/CRM1; interacts both alone and in complex with EIF4E and 4ESE-containing mRNAs to form an EIF4E-dependent mRNA export complex. Interacts with importin IPO8; the interaction occurs when LRPPRC is in its RNA-free form and returns LRPPRC to the nucleus for further export rounds. Interacts with BECN1. As to expression, strongly expressed in heart, liver and kidney. Weakly expressed in brain, skeletal muscle and testes.

Its subcellular location is the mitochondrion. The protein localises to the nucleus. It is found in the nucleoplasm. The protein resides in the nucleus inner membrane. It localises to the nucleus outer membrane. Its function is as follows. May play a role in RNA metabolism in both nuclei and mitochondria. In the nucleus binds to HNRPA1-associated poly(A) mRNAs and is part of nmRNP complexes at late stages of mRNA maturation which are possibly associated with nuclear mRNA export. Positively modulates nuclear export of mRNAs containing the EIF4E sensitivity element (4ESE) by binding simultaneously to both EIF4E and the 4ESE and acting as a platform for assembly for the RNA export complex. Also binds to exportin XPO1/CRM1 to engage the nuclear pore and traffic the bound mRNAs to the cytoplasm. May bind mature mRNA in the nucleus outer membrane. In mitochondria binds to poly(A) mRNA. Plays a role in translation or stability of mitochondrially encoded cytochrome c oxidase (COX) subunits. May be involved in transcription regulation. Cooperates with PPARGC1A to regulate certain mitochondrially encoded genes and gluconeogenic genes and may regulate docking of PPARGC1A to transcription factors. Seems to be involved in the transcription regulation of the multidrug-related genes MDR1 and MVP. Part of a nuclear factor that binds to the invMED1 element of MDR1 and MVP gene promoters. Binds single-stranded DNA. Required for maintaining mitochondrial potential. Suppresses the initiation of basal levels of autophagy and mitophagy by sustaining BCL2 levels. The sequence is that of Leucine-rich PPR motif-containing protein, mitochondrial (Lrpprc) from Mus musculus (Mouse).